Here is a 535-residue protein sequence, read N- to C-terminus: Light-independent protochlorophyllide reductase subunit B (535 aa).

Aspartate 36 is a binding site for [4Fe-4S] cluster. The active-site Proton donor is aspartate 292. Residue 428-429 participates in substrate binding; that stretch reads GL.

Belongs to the ChlB/BchB/BchZ family. Protochlorophyllide reductase is composed of three subunits; BchL, BchN and BchB. Forms a heterotetramer of two BchB and two BchN subunits. [4Fe-4S] cluster serves as cofactor.

The enzyme catalyses chlorophyllide a + oxidized 2[4Fe-4S]-[ferredoxin] + 2 ADP + 2 phosphate = protochlorophyllide a + reduced 2[4Fe-4S]-[ferredoxin] + 2 ATP + 2 H2O. It participates in porphyrin-containing compound metabolism; bacteriochlorophyll biosynthesis (light-independent). Functionally, component of the dark-operative protochlorophyllide reductase (DPOR) that uses Mg-ATP and reduced ferredoxin to reduce ring D of protochlorophyllide (Pchlide) to form chlorophyllide a (Chlide). This reaction is light-independent. The NB-protein (BchN-BchB) is the catalytic component of the complex. The sequence is that of Light-independent protochlorophyllide reductase subunit B from Chlorobaculum parvum (strain DSM 263 / NCIMB 8327) (Chlorobium vibrioforme subsp. thiosulfatophilum).